We begin with the raw amino-acid sequence, 1199 residues long: Nucleolar protein 6 (1199 aa).

Positions 1 to 10 (MLRNKRKAGK) are enriched in basic residues. Disordered regions lie at residues 1 to 51 (MLRN…EPKP) and 1146 to 1199 (KREQ…KALK). Composition is skewed to basic and acidic residues over residues 28-37 (HAEDHSDLEH) and 1146-1169 (KREQ…EKST).

This sequence belongs to the NRAP family. In terms of assembly, part of the small subunit (SSU) processome, composed of more than 70 proteins and the RNA chaperone small nucleolar RNA (snoRNA) U3.

The protein localises to the nucleus. The protein resides in the nucleolus. It localises to the chromosome. In terms of biological role, part of the small subunit (SSU) processome, first precursor of the small eukaryotic ribosomal subunit. During the assembly of the SSU processome in the nucleolus, many ribosome biogenesis factors, an RNA chaperone and ribosomal proteins associate with the nascent pre-rRNA and work in concert to generate RNA folding, modifications, rearrangements and cleavage as well as targeted degradation of pre-ribosomal RNA by the RNA exosome. This is Nucleolar protein 6 from Drosophila yakuba (Fruit fly).